We begin with the raw amino-acid sequence, 324 residues long: Myb-like DNA-binding protein myb-1 (324 aa).

2 consecutive HTH myb-type domains span residues 4–59 (MPDQ…KPGL) and 60–110 (NHGP…NRKK). The tract at residues 107 to 231 (NRKKNQLRRQ…PTGSTLRLLT (125 aa)) is disordered. Residues 155-165 (RRPSSPSSFND) show a composition bias toward polar residues. A compositionally biased stretch (basic and acidic residues) spans 166 to 175 (SLHHRVHESI). 2 stretches are compositionally biased toward low complexity: residues 183–192 (QQQQQQQQQQ) and 222–231 (PTGSTLRLLT).

It is found in the nucleus. The sequence is that of Myb-like DNA-binding protein myb-1 (rca-1) from Neurospora crassa (strain ATCC 24698 / 74-OR23-1A / CBS 708.71 / DSM 1257 / FGSC 987).